The chain runs to 914 residues: PHD finger protein 14 (914 aa).

The disordered stretch occupies residues 19-276 (DALDYDSSDD…EDSLLERPQT (258 aa)). The span at 53–68 (ESAAGSESDSDAAAAS) shows a compositional bias: low complexity. Positions 90-102 (EKVKESFSEETSS) are enriched in basic and acidic residues. Acidic residues-rich tracts occupy residues 155-168 (ELNE…EDDN) and 191-233 (GEED…DSEE). The PHD-type 1 zinc finger occupies 285–346 (ILICCVCLGD…PWFCDACKNG (62 aa)). 20 residues coordinate Zn(2+): Cys-288, Cys-291, Cys-305, Cys-308, His-313, Cys-316, Cys-340, Cys-343, Cys-351, Cys-354, His-371, Cys-374, Cys-407, Cys-410, Cys-424, Cys-429, His-434, Cys-437, Cys-461, and His-464. A C2HC pre-PHD-type zinc finger spans residues 348–381 (SPSCELCPSQDGIFKETDAGRWVHVVCALYVPGV). A PHD-type 2 zinc finger spans residues 405–465 (KECSLCEDTR…PFFAYCKQHA (61 aa)). Residues 596-644 (MIQIQDNIVEQKNLKDKLESEQEKLHMEYDKLCESLEDLQNVNGQLRTE) adopt a coiled-coil conformation. The PHD-type 3 zinc-finger motif lies at 692–746 (LYSCGICKKNQDQHLLLLCDTCKLHYHLGCLDPPLTRMPKKTKNSYWQCSECDQA). Cys-695, Cys-698, Cys-710, Cys-713, His-718, Cys-721, Cys-740, and Cys-743 together coordinate Zn(2+). Residues 777–838 (PQEMSPEPKK…PKADDTRTEC (62 aa)) form a disordered region. Basic residues predominate over residues 792–802 (TRTRGQKRKRM). Basic and acidic residues predominate over residues 803–817 (SICEEEKMEEPLPRE). The segment at 835-888 (RTECTTCKGPGDNENLVRCDECRLCYHFGCLDPPLKKSPKQTGYGWICQECDTS) adopts a PHD-type 4 zinc-finger fold. Zn(2+)-binding residues include Cys-838, Cys-841, Cys-853, Cys-856, His-861, Cys-864, Cys-882, and Cys-885. A disordered region spans residues 887-914 (TSSSKEEEAQEVEEESVNEETAEQEIPD). Residues 894–914 (EAQEVEEESVNEETAEQEIPD) show a composition bias toward acidic residues.

As to quaternary structure, interacts with histone H3.

Its subcellular location is the nucleus. Histone-binding protein. Binds preferentially to unmodified histone H3 but can also bind to a lesser extent to histone H3 trimethylated at 'Lys-9' (H3K9me3) as well as to histone H3 monomethylated at 'Lys-27' (H3K27ac) and trimethylated at 'Lys-27' (H3K27me3). Represses PDGFRA expression, thus playing a role in regulation of mesenchymal cell proliferation. The chain is PHD finger protein 14 from Danio rerio (Zebrafish).